The primary structure comprises 504 residues: Maturase K (504 aa).

It belongs to the intron maturase 2 family. MatK subfamily.

The protein localises to the plastid. It is found in the chloroplast. In terms of biological role, usually encoded in the trnK tRNA gene intron. Probably assists in splicing its own and other chloroplast group II introns. This chain is Maturase K, found in Draba nemorosa (Woodland whitlowgrass).